The following is a 96-amino-acid chain: Protein Vpr (96 aa).

Residues 1–42 form a homooligomerization region; that stretch reads MEQPPEDQGPQREPYNEWTLELLEELKHEAVRHFPREWLHGL. Residues Ser79 and Ser96 each carry the phosphoserine; by host modification.

This sequence belongs to the HIV-1 VPR protein family. As to quaternary structure, homooligomer, may form homodimer. Interacts with p6-gag region of the Pr55 Gag precursor protein through a (Leu-X-X)4 motif near the C-terminus of the P6gag protein. Interacts with host UNG. May interact with host RAD23A/HHR23A. Interacts with host VPRBP/DCAF1, leading to hijack the CUL4A-RBX1-DDB1-DCAF1/VPRBP complex, mediating ubiquitination of host proteins such as TERT and ZGPAT and arrest of the cell cycle in G2 phase. In terms of processing, phosphorylated on several residues by host. These phosphorylations regulate VPR activity for the nuclear import of the HIV-1 pre-integration complex.

The protein localises to the virion. Its subcellular location is the host nucleus. The protein resides in the host extracellular space. Its function is as follows. During virus replication, may deplete host UNG protein, and incude G2-M cell cycle arrest. Acts by targeting specific host proteins for degradation by the 26S proteasome, through association with the cellular CUL4A-DDB1 E3 ligase complex by direct interaction with host VPRPB/DCAF-1. Cell cycle arrest reportedly occurs within hours of infection and is not blocked by antiviral agents, suggesting that it is initiated by the VPR carried into the virion. Additionally, VPR induces apoptosis in a cell cycle dependent manner suggesting that these two effects are mechanistically linked. Detected in the serum and cerebrospinal fluid of AIDS patient, VPR may also induce cell death to bystander cells. Functionally, during virus entry, plays a role in the transport of the viral pre-integration (PIC) complex to the host nucleus. This function is crucial for viral infection of non-dividing macrophages. May act directly at the nuclear pore complex, by binding nucleoporins phenylalanine-glycine (FG)-repeat regions. This is Protein Vpr from Homo sapiens (Human).